A 393-amino-acid polypeptide reads, in one-letter code: Small RNA 2'-O-methyltransferase (393 aa).

3 residues coordinate S-adenosyl-L-methionine: Ser60, Asp78, and Ser114. Glu132, Glu135, His136, and His181 together coordinate Mg(2+). Positions 283–309 (RVSHLPRRKEQDGEQGDKPKDIGGSKA) are disordered. The segment covering 290–305 (RKEQDGEQGDKPKDIG) has biased composition (basic and acidic residues).

It belongs to the methyltransferase superfamily. HEN1 family. Mg(2+) serves as cofactor.

Its subcellular location is the cytoplasm. It catalyses the reaction small RNA 3'-end nucleotide + S-adenosyl-L-methionine = small RNA 3'-end 2'-O-methylnucleotide + S-adenosyl-L-homocysteine + H(+). Functionally, methyltransferase that adds a 2'-O-methyl group at the 3'-end of piRNAs, a class of 24 to 30 nucleotide RNAs that are generated by a Dicer-independent mechanism and are primarily derived from transposons and other repeated sequence elements. This probably protects the 3'-end of piRNAs from uridylation activity and subsequent degradation. Stabilization of piRNAs is essential for gametogenesis. The protein is Small RNA 2'-O-methyltransferase (HENMT1) of Macaca fascicularis (Crab-eating macaque).